The chain runs to 447 residues: Argininosuccinate lyase (447 aa).

The protein belongs to the lyase 1 family. Argininosuccinate lyase subfamily.

It is found in the cytoplasm. It carries out the reaction 2-(N(omega)-L-arginino)succinate = fumarate + L-arginine. Its pathway is amino-acid biosynthesis; L-arginine biosynthesis; L-arginine from L-ornithine and carbamoyl phosphate: step 3/3. This Bacteroides fragilis (strain ATCC 25285 / DSM 2151 / CCUG 4856 / JCM 11019 / LMG 10263 / NCTC 9343 / Onslow / VPI 2553 / EN-2) protein is Argininosuccinate lyase.